The following is a 513-amino-acid chain: ATP synthase subunit alpha (513 aa).

Residue 169–176 participates in ATP binding; sequence GDRQTGKT.

This sequence belongs to the ATPase alpha/beta chains family. F-type ATPases have 2 components, CF(1) - the catalytic core - and CF(0) - the membrane proton channel. CF(1) has five subunits: alpha(3), beta(3), gamma(1), delta(1), epsilon(1). CF(0) has three main subunits: a(1), b(2) and c(9-12). The alpha and beta chains form an alternating ring which encloses part of the gamma chain. CF(1) is attached to CF(0) by a central stalk formed by the gamma and epsilon chains, while a peripheral stalk is formed by the delta and b chains.

It localises to the cell inner membrane. The catalysed reaction is ATP + H2O + 4 H(+)(in) = ADP + phosphate + 5 H(+)(out). Its function is as follows. Produces ATP from ADP in the presence of a proton gradient across the membrane. The alpha chain is a regulatory subunit. The polypeptide is ATP synthase subunit alpha (Shewanella putrefaciens (strain CN-32 / ATCC BAA-453)).